The sequence spans 64 residues: Crotamine CRO3 (64 aa).

Positions 1–22 are cleaved as a signal peptide; that stretch reads MILYLLFAFLFLAFLSEPGNAY. 3 disulfide bridges follow: Cys-25–Cys-57, Cys-32–Cys-51, and Cys-39–Cys-58.

This sequence belongs to the crotamine-myotoxin family. In terms of assembly, monomer. As to expression, expressed by the venom gland.

It is found in the secreted. Its function is as follows. Cationic peptide that possesses multiple functions. It acts as a cell-penetrating peptide (CPP), and as a potent voltage-gated potassium channel (Kv) inhibitor. It exhibits antimicrobial activities, hind limb paralysis, and severe muscle necrosis by a non-enzymatic mechanism. The polypeptide is Crotamine CRO3 (CRO3) (Crotalus durissus terrificus (South American rattlesnake)).